A 273-amino-acid chain; its full sequence is MTTASAIPDNDPLVLYGQTFHSRLLLGTARYPSPDLLEAAVKRAKPAMLTASLRRQSASPGASDSGNGFWELLRRLAVPVLPNTAGCHSVQEVIATAQMARELFDTPWIKLELIGDDYTLQPDTLNLVDAASQLIRDGFQVLPYCTEDLVLCQRLVDVGCQAVMPWAAPIGTGRGPVNPYALQLLRERLSVPMLVDAGLGLPSHACQVMEWGYDGVLLNTAVALAQDPVSMAGAFADAVQAGRAAHRAGAMAAQDSAQPSTPVLGTPFWHHAP.

Residue Lys110 is the Schiff-base intermediate with DXP of the active site. Residues Gly171, 197–198 (AG), and 219–220 (NT) each bind 1-deoxy-D-xylulose 5-phosphate. Residues 251–273 (MAAQDSAQPSTPVLGTPFWHHAP) are disordered.

It belongs to the ThiG family. In terms of assembly, homotetramer. Forms heterodimers with either ThiH or ThiS.

Its subcellular location is the cytoplasm. It carries out the reaction [ThiS sulfur-carrier protein]-C-terminal-Gly-aminoethanethioate + 2-iminoacetate + 1-deoxy-D-xylulose 5-phosphate = [ThiS sulfur-carrier protein]-C-terminal Gly-Gly + 2-[(2R,5Z)-2-carboxy-4-methylthiazol-5(2H)-ylidene]ethyl phosphate + 2 H2O + H(+). The protein operates within cofactor biosynthesis; thiamine diphosphate biosynthesis. Its function is as follows. Catalyzes the rearrangement of 1-deoxy-D-xylulose 5-phosphate (DXP) to produce the thiazole phosphate moiety of thiamine. Sulfur is provided by the thiocarboxylate moiety of the carrier protein ThiS. In vitro, sulfur can be provided by H(2)S. This is Thiazole synthase from Variovorax paradoxus (strain S110).